A 1193-amino-acid polypeptide reads, in one-letter code: DNA-directed RNA polymerase subunit beta (1193 aa).

A compositionally biased stretch (acidic residues) spans 1153–1162 (EMRDLEDDED). The interval 1153 to 1193 (EMRDLEDDEDAKQNEGLSLPNDEESEELVSADAERDVVTKE) is disordered. Residues 1184–1193 (DAERDVVTKE) show a composition bias toward basic and acidic residues.

It belongs to the RNA polymerase beta chain family. The RNAP catalytic core consists of 2 alpha, 1 beta, 1 beta' and 1 omega subunit. When a sigma factor is associated with the core the holoenzyme is formed, which can initiate transcription.

It catalyses the reaction RNA(n) + a ribonucleoside 5'-triphosphate = RNA(n+1) + diphosphate. Functionally, DNA-dependent RNA polymerase catalyzes the transcription of DNA into RNA using the four ribonucleoside triphosphates as substrates. This is DNA-directed RNA polymerase subunit beta from Bacillus licheniformis (strain ATCC 14580 / DSM 13 / JCM 2505 / CCUG 7422 / NBRC 12200 / NCIMB 9375 / NCTC 10341 / NRRL NRS-1264 / Gibson 46).